A 142-amino-acid polypeptide reads, in one-letter code: Natriuretic peptides A (142 aa).

A signal peptide spans 1–23 (MMLKTVIYTGVLFLICNKVLVRA). A propeptide spanning residues 24–112 (DPLYSPYSSK…RLRDLLMAPR (89 aa)) is cleaved from the precursor. Residues 47-123 (DTLGQDEGND…NRGSSGCFGS (77 aa)) are disordered. Positions 77–94 (WDRERERQWPASDYKKPQ) are enriched in basic and acidic residues. Cysteines 120 and 136 form a disulfide.

The protein belongs to the natriuretic peptide family. In terms of processing, cleaved upon secretion to produce the functional hormone. Expressed in heart atrium and to a lower extent in heart ventricle, but not in brain.

The protein localises to the secreted. In terms of biological role, hormone playing a key role in cardiovascular homeostasis through regulation of natriuresis, diuresis, and vasodilation. Has a cGMP-stimulating activity. This is Natriuretic peptides A (nppa) from Acipenser transmontanus (White sturgeon).